The primary structure comprises 401 residues: Odorant receptor 88a (401 aa).

At Met-1–Gln-26 the chain is on the cytoplasmic side. Residues Met-27–Val-47 traverse the membrane as a helical segment. Residues Pro-48–Ser-52 lie on the Extracellular side of the membrane. A helical transmembrane segment spans residues Ala-53–Leu-73. Residues Gly-74–Arg-142 lie on the Cytoplasmic side of the membrane. The helical transmembrane segment at Ile-143–Thr-163 threads the bilayer. Over His-164–Asn-191 the chain is Extracellular. The chain crosses the membrane as a helical span at residues Phe-192–Val-212. Topologically, residues Thr-213–Lys-277 are cytoplasmic. A helical membrane pass occupies residues Val-278–Leu-298. The Extracellular portion of the chain corresponds to Ser-299–Asp-303. A helical membrane pass occupies residues Val-304–Ile-324. The Cytoplasmic segment spans residues Cys-325–Gln-370. The helical transmembrane segment at Leu-371–Ala-391 threads the bilayer. Topologically, residues Tyr-392–His-401 are extracellular.

This sequence belongs to the insect chemoreceptor superfamily. Heteromeric odorant receptor channel (TC 1.A.69) family. Or49a subfamily. In terms of assembly, interacts with Orco. Complexes exist early in the endomembrane system in olfactory sensory neurons (OSNs), coupling these complexes to the conserved ciliary trafficking pathway. In terms of tissue distribution, expressed in olfactory sensory neurons in the antenna.

The protein localises to the cell membrane. In terms of biological role, odorant receptor which mediates acceptance or avoidance behavior, depending on its substrates. The odorant receptor repertoire encodes a large collection of odor stimuli that vary widely in identity, intensity, and duration. May form a complex with Orco to form odorant-sensing units, providing sensitive and prolonged odorant signaling and calcium permeability. In Drosophila melanogaster (Fruit fly), this protein is Odorant receptor 88a (Or88a).